We begin with the raw amino-acid sequence, 150 residues long: D-aminoacyl-tRNA deacylase (150 aa).

A Gly-cisPro motif, important for rejection of L-amino acids motif is present at residues 137 to 138; it reads GP.

This sequence belongs to the DTD family. In terms of assembly, homodimer.

The protein localises to the cytoplasm. It catalyses the reaction glycyl-tRNA(Ala) + H2O = tRNA(Ala) + glycine + H(+). It carries out the reaction a D-aminoacyl-tRNA + H2O = a tRNA + a D-alpha-amino acid + H(+). In terms of biological role, an aminoacyl-tRNA editing enzyme that deacylates mischarged D-aminoacyl-tRNAs. Also deacylates mischarged glycyl-tRNA(Ala), protecting cells against glycine mischarging by AlaRS. Acts via tRNA-based rather than protein-based catalysis; rejects L-amino acids rather than detecting D-amino acids in the active site. By recycling D-aminoacyl-tRNA to D-amino acids and free tRNA molecules, this enzyme counteracts the toxicity associated with the formation of D-aminoacyl-tRNA entities in vivo and helps enforce protein L-homochirality. In Listeria monocytogenes serotype 4b (strain CLIP80459), this protein is D-aminoacyl-tRNA deacylase.